We begin with the raw amino-acid sequence, 989 residues long: Envelope glycoprotein gp130 (989 aa).

The interval 1-15 (MAPPMTLQQWIIWKK) is involved in virion budding. The Cytoplasmic segment spans residues 1 to 65 (MAPPMTLQQW…YLLYTCCATS (65 aa)). Residues Lys14, Lys15, Lys18, Lys34, and Lys53 each participate in a glycyl lysine isopeptide (Lys-Gly) (interchain with G-Cter in ubiquitin) cross-link. The helical; Signal-anchor for type III membrane protein transmembrane segment at 66–88 (SRVLAWMFLVCILLIIVLVSCFV) threads the bilayer. Residues 89–961 (TISRIQWNKD…AFSLLGYLKP (873 aa)) are Lumenal-facing. Asn109, Asn141, Asn183, Asn286, Asn311, Asn346, Asn391, Asn405, Asn423, Asn528, and Asn557 each carry an N-linked (GlcNAc...) asparagine; by host glycan. Positions 577-599 (NYAKLRSMGYALTGAVQTLSQIS) are fusion peptide. Residues Asn783, Asn809, and Asn834 are each glycosylated (N-linked (GlcNAc...) asparagine; by host). Residues 962–982 (ILIGVGVILLVILIFKIVSWI) traverse the membrane as a helical segment. Residues 983–989 (PTKKKNQ) are Cytoplasmic-facing. The short motif at 985–987 (KKK) is the Endoplasmic reticulum retention signal element.

As to quaternary structure, the mature envelope protein consists of a trimer of SU-TM heterodimers. The N-terminus of leader peptide specifically interacts with Gag protein. This specific interaction between Gag protein and Env glycoprotein may allow particle egress. Post-translationally, envelope glycoproteins are synthesized as an inactive precursor that is processed by host furin or a furin-like protease to yield a functional hetero-oligomeric complex. In terms of processing, the transmembrane protein and the surface protein are N-glycosylated. Mono- and polyubiquitinated leader peptide are found in viral particles. Ubiquitination may be involved in regulating the balance between viral and subviral particles release.

The protein resides in the host endoplasmic reticulum membrane. The protein localises to the virion membrane. The surface protein (SU) attaches the virus to the host cell by binding to the cell receptor. This interaction triggers the refolding of transmembrane protein (TM) and is thought to activate its fusogenic potential by unmasking its fusion peptide. Its function is as follows. The transmembrane protein (TM) acts as a class I viral fusion protein. Under the current model, the protein has at least 3 conformational states: pre-fusion native state, pre-hairpin intermediate state, and post-fusion hairpin state. During viral and target cell membrane fusion, the coiled coil regions (heptad repeats) assume a trimer-of-hairpins structure, positioning the fusion peptide in close proximity to the C-terminal region of the ectodomain. The formation of this structure appears to drive apposition and subsequent fusion of viral and target cell membranes. Membranes fusion leads to delivery of the nucleocapsid into the cytoplasm. Functionally, the leader peptide is a component of released, infectious virions and is required for particle budding. This is Envelope glycoprotein gp130 (env) from Homo sapiens (Human).